A 438-amino-acid polypeptide reads, in one-letter code: GRAS family protein TF80 (438 aa).

The GRAS domain occupies 13-436; it reads LRYDSHGSNP…RPLFSVSAWK (424 aa). The leucine repeat I (LRI) stretch occupies residues 20–81; the sequence is SNPMIPLIEC…YKIVKHLPGV (62 aa). Residues 100 to 165 are VHIID; that stretch reads QKYFYDLCPF…GGPPFLKITG (66 aa). The VHIID motif lies at 131 to 135; it reads VHIID. Positions 175-207 are leucine repeat II (LRII); that stretch reads QMSFHLTTEAGILDFPLQFNPIISKLEDVDFEN. The PFYRE stretch occupies residues 216–359; that stretch reads VAISSVLQLH…SMLLGEQIKN (144 aa). Residues 224-228 carry the LXXLL motif motif; the sequence is LHSLL. The tract at residues 362-436 is SAW; that stretch reads TCEGVDRKER…RPLFSVSAWK (75 aa).

Belongs to the GRAS family. In terms of assembly, interacts with RAM1.

The protein localises to the nucleus. The polypeptide is GRAS family protein TF80 (TF80) (Medicago truncatula (Barrel medic)).